We begin with the raw amino-acid sequence, 430 residues long: KIN17-like protein (430 aa).

The C2H2-type zinc-finger motif lies at 28–50; it reads CQMCQKQCRDENGFKCHCMSESH. The segment at 51–160 is winged helix-turn-helix (wHTH); sequence QRQMQVFGQA…KARLKRKRIK (110 aa). Positions 147-183 form a coiled coil; the sequence is EQAVKARLKRKRIKSDLAEDERQERMIARQIERAQQS. The short motif at 155–158 is the Nuclear localization signal (NLS) element; sequence KRKR. Disordered stretches follow at residues 179-230 and 261-284; these read RAQQ…ANKA and EEEDEVSARDKEKEELAKKKGKDA. A compositionally biased stretch (acidic residues) spans 191–224; that stretch reads LGDDASPDGSEGESGSEDEYSDSENDHEGQEEDA. The segment covering 261 to 278 has biased composition (basic and acidic residues); that stretch reads EEEDEVSARDKEKEELAK. Residues 283–312 adopt a coiled-coil conformation; that stretch reads DAINAAEARRSALDELMKEEEKAKERSNRK. The interval 319–370 is C-terminal subdomain A; it reads GIVVKVMSKSLAEKGYCKQKGVVKRVIDKYVGEIEMLESKHVLRVDQDELET. Residues 376–427 are C-terminal subdomain B; the sequence is GGLVRIVNGAYRGSNARLLSVDTERFCAKVQVEKGLYDGKVLKAIEYEDICK.

The protein belongs to the KIN17 family.

The protein resides in the nucleus. The polypeptide is KIN17-like protein (Oryza sativa subsp. japonica (Rice)).